The primary structure comprises 1306 residues: DNA-directed RNA polymerase subunit beta' (1306 aa).

Residues Cys-214, Cys-285, Cys-292, and Cys-295 each contribute to the Zn(2+) site. 2 disordered regions span residues 1234–1263 (LDNG…PNRL) and 1281–1306 (IARA…DDDK). The segment covering 1247 to 1259 (QGERDNNNSDKKP) has biased composition (basic and acidic residues).

Belongs to the RNA polymerase beta' chain family. RpoC2 subfamily. In terms of assembly, in cyanobacteria the RNAP catalytic core is composed of 2 alpha, 1 beta, 1 beta', 1 gamma and 1 omega subunit. When a sigma factor is associated with the core the holoenzyme is formed, which can initiate transcription. Zn(2+) serves as cofactor.

The enzyme catalyses RNA(n) + a ribonucleoside 5'-triphosphate = RNA(n+1) + diphosphate. In terms of biological role, DNA-dependent RNA polymerase catalyzes the transcription of DNA into RNA using the four ribonucleoside triphosphates as substrates. In Crocosphaera subtropica (strain ATCC 51142 / BH68) (Cyanothece sp. (strain ATCC 51142)), this protein is DNA-directed RNA polymerase subunit beta'.